The chain runs to 296 residues: Iron(3+)-hydroxamate-binding protein FhuD (296 aa).

A signal peptide (tat-type signal) is located at residues methionine 1–alanine 30. A Fe/B12 periplasmic-binding domain is found at arginine 37–alanine 296. Fe(III)-coprogen contacts are provided by tryptophan 68, arginine 84, serine 103, tyrosine 106, phenylalanine 124, tryptophan 217, tryptophan 273, phenylalanine 274, and tyrosine 275.

It belongs to the bacterial solute-binding protein 8 family. The complex is composed of two ATP-binding proteins (FhuC), a transmembrane protein (FhuB) and a solute-binding protein (FhuD). FhuD interacts with FhuB. Substrate-loaded FhuD binds FhuB more strongly than FhuD alone. Exported by the Tat system. The position of the signal peptide cleavage has been experimentally proven. Can also be exported by the Sec system.

Its subcellular location is the periplasm. Its function is as follows. Part of the ABC transporter complex FhuCDB involved in iron(3+)-hydroxamate import. Binds the iron(3+)-hydroxamate complex and transfers it to the membrane-bound permease. Required for the transport of all iron(3+)-hydroxamate siderophores such as ferrichrome, gallichrome, desferrioxamine, coprogen, aerobactin, shizokinen, rhodotorulic acid and the antibiotic albomycin. This Escherichia coli (strain K12) protein is Iron(3+)-hydroxamate-binding protein FhuD (fhuD).